A 312-amino-acid chain; its full sequence is Pantothenate kinase (312 aa).

97–104 (GSVAVGKS) lines the ATP pocket.

The protein belongs to the prokaryotic pantothenate kinase family.

The protein localises to the cytoplasm. It catalyses the reaction (R)-pantothenate + ATP = (R)-4'-phosphopantothenate + ADP + H(+). It functions in the pathway cofactor biosynthesis; coenzyme A biosynthesis; CoA from (R)-pantothenate: step 1/5. This is Pantothenate kinase from Mycolicibacterium smegmatis (strain ATCC 700084 / mc(2)155) (Mycobacterium smegmatis).